A 418-amino-acid chain; its full sequence is Gamma-glutamyl phosphate reductase (418 aa).

The protein belongs to the gamma-glutamyl phosphate reductase family.

It is found in the cytoplasm. It catalyses the reaction L-glutamate 5-semialdehyde + phosphate + NADP(+) = L-glutamyl 5-phosphate + NADPH + H(+). It functions in the pathway amino-acid biosynthesis; L-proline biosynthesis; L-glutamate 5-semialdehyde from L-glutamate: step 2/2. Functionally, catalyzes the NADPH-dependent reduction of L-glutamate 5-phosphate into L-glutamate 5-semialdehyde and phosphate. The product spontaneously undergoes cyclization to form 1-pyrroline-5-carboxylate. This is Gamma-glutamyl phosphate reductase from Pelobacter propionicus (strain DSM 2379 / NBRC 103807 / OttBd1).